The primary structure comprises 582 residues: Arginine--tRNA ligase (582 aa).

Residues 128–138 (PNLAKEMHVGH) carry the 'HIGH' region motif.

The protein belongs to the class-I aminoacyl-tRNA synthetase family. As to quaternary structure, monomer.

Its subcellular location is the cytoplasm. It catalyses the reaction tRNA(Arg) + L-arginine + ATP = L-arginyl-tRNA(Arg) + AMP + diphosphate. This Colwellia psychrerythraea (strain 34H / ATCC BAA-681) (Vibrio psychroerythus) protein is Arginine--tRNA ligase.